Reading from the N-terminus, the 1353-residue chain is Patatin-like phospholipase domain-containing protein ZK370.4 (1353 aa).

A helical transmembrane segment spans residues 12-32 (IFLVTFIYNHVLLILFTVCII). A compositionally biased stretch (low complexity) spans 49–64 (TPSSASSSATPSSRNS). 2 disordered regions span residues 49-188 (TPSS…STAF) and 199-218 (SRSY…VRPP). Polar residues predominate over residues 91 to 123 (SPKSGTPTNTQTIEPPTSLNLNMVNSASGSNLS). Basic residues-rich tracts occupy residues 126–138 (RRMR…KKLY) and 170–184 (PRRR…RRRQ). A nucleoside 3',5'-cyclic phosphate contacts are provided by residues 245–372 (LKML…VITR), 444–581 (FGLV…VLRR), and 570–692 (IYLP…LGQY). The 167-residue stretch at 942 to 1108 (LVLGGGGARG…VNNVPADVMR (167 aa)) folds into the PNPLA domain. The GXGXXG motif lies at 946 to 951 (GGGARG). A GXSXG motif is present at residues 973–977 (GTSIG). Residue Ser-975 is the Nucleophile of the active site. The active-site Proton acceptor is Asp-1095. Positions 1095–1097 (DGG) match the DGA/G motif. Disordered regions lie at residues 1230 to 1249 (EKET…PDVS), 1274 to 1293 (SMSL…DHFL), and 1305 to 1353 (YEEE…PPSS). A compositionally biased stretch (low complexity) spans 1328–1337 (GPPSSSSSGG).

Belongs to the NTE family.

The protein resides in the membrane. The protein is Patatin-like phospholipase domain-containing protein ZK370.4 of Caenorhabditis elegans.